The following is a 469-amino-acid chain: 3-isopropylmalate dehydratase large subunit (469 aa).

3 residues coordinate [4Fe-4S] cluster: cysteine 350, cysteine 410, and cysteine 413.

Belongs to the aconitase/IPM isomerase family. LeuC type 1 subfamily. Heterodimer of LeuC and LeuD. It depends on [4Fe-4S] cluster as a cofactor.

It catalyses the reaction (2R,3S)-3-isopropylmalate = (2S)-2-isopropylmalate. It participates in amino-acid biosynthesis; L-leucine biosynthesis; L-leucine from 3-methyl-2-oxobutanoate: step 2/4. Catalyzes the isomerization between 2-isopropylmalate and 3-isopropylmalate, via the formation of 2-isopropylmaleate. The protein is 3-isopropylmalate dehydratase large subunit of Sinorhizobium fredii (strain NBRC 101917 / NGR234).